The following is a 398-amino-acid chain: MQKRLTLLGSTGSIGDSTLDVVARHPERFAVHALTAHRNGEKLVAQCLRFAPDVAVVGDAETAARVEAQLRAAGSRTQVAYGKQALVDVSKSDGCDTVVAAIVGAAGLAPSLAAARAGKRILLANKEALVMSGAIFMDAVRDHGAILLPVDSEHNAIFQCMPRDAAEHGGIAKIIVTASGGPFRTREPATLASVTPDEACKHPNWVMGRKISVDSATMMNKGLEVIEAHWLFGLPSERIDVLIHPQSVIHSLVSYRDGSVLAQLGNPDMRTPIAHALAFPERVDAGVAQLDLAQIATLTFEKPDYARFPCLALAIDALEAGGVASAALNAANEIAVDAFLSRRIRFTAIAQTVGAVLDGLSNRTPGGLDDVIEADAAARRAATAFIGKLPAPGVERAA.

7 residues coordinate NADPH: threonine 11, glycine 12, serine 13, isoleucine 14, arginine 38, asparagine 39, and asparagine 125. Position 126 (lysine 126) interacts with 1-deoxy-D-xylulose 5-phosphate. Residue glutamate 127 participates in NADPH binding. Aspartate 151 contributes to the Mn(2+) binding site. Serine 152, glutamate 153, serine 179, and histidine 202 together coordinate 1-deoxy-D-xylulose 5-phosphate. Glutamate 153 is a Mn(2+) binding site. Glycine 208 provides a ligand contact to NADPH. The 1-deoxy-D-xylulose 5-phosphate site is built by serine 215, asparagine 220, lysine 221, and glutamate 224. Glutamate 224 provides a ligand contact to Mn(2+).

The protein belongs to the DXR family. Mg(2+) serves as cofactor. Mn(2+) is required as a cofactor.

It catalyses the reaction 2-C-methyl-D-erythritol 4-phosphate + NADP(+) = 1-deoxy-D-xylulose 5-phosphate + NADPH + H(+). The protein operates within isoprenoid biosynthesis; isopentenyl diphosphate biosynthesis via DXP pathway; isopentenyl diphosphate from 1-deoxy-D-xylulose 5-phosphate: step 1/6. Its function is as follows. Catalyzes the NADPH-dependent rearrangement and reduction of 1-deoxy-D-xylulose-5-phosphate (DXP) to 2-C-methyl-D-erythritol 4-phosphate (MEP). The sequence is that of 1-deoxy-D-xylulose 5-phosphate reductoisomerase from Burkholderia pseudomallei (strain 1106a).